Reading from the N-terminus, the 383-residue chain is Acetylornithine deacetylase (383 aa).

Position 80 (His-80) interacts with Zn(2+). Asp-82 is an active-site residue. Asp-112 is a Zn(2+) binding site. Residue Glu-144 is part of the active site. Residues Glu-145, Glu-169, and His-355 each contribute to the Zn(2+) site.

This sequence belongs to the peptidase M20A family. ArgE subfamily. In terms of assembly, homodimer. It depends on Zn(2+) as a cofactor. Co(2+) serves as cofactor. The cofactor is glutathione.

The protein resides in the cytoplasm. It catalyses the reaction N(2)-acetyl-L-ornithine + H2O = L-ornithine + acetate. Its pathway is amino-acid biosynthesis; L-arginine biosynthesis; L-ornithine from N(2)-acetyl-L-ornithine (linear): step 1/1. Functionally, catalyzes the hydrolysis of the amide bond of N(2)-acetylated L-amino acids. Cleaves the acetyl group from N-acetyl-L-ornithine to form L-ornithine, an intermediate in L-arginine biosynthesis pathway, and a branchpoint in the synthesis of polyamines. This Pectobacterium atrosepticum (strain SCRI 1043 / ATCC BAA-672) (Erwinia carotovora subsp. atroseptica) protein is Acetylornithine deacetylase.